A 172-amino-acid chain; its full sequence is Peptide methionine sulfoxide reductase MsrA (172 aa).

Cysteine 12 is a catalytic residue.

Belongs to the MsrA Met sulfoxide reductase family.

The catalysed reaction is L-methionyl-[protein] + [thioredoxin]-disulfide + H2O = L-methionyl-(S)-S-oxide-[protein] + [thioredoxin]-dithiol. The enzyme catalyses [thioredoxin]-disulfide + L-methionine + H2O = L-methionine (S)-S-oxide + [thioredoxin]-dithiol. In terms of biological role, has an important function as a repair enzyme for proteins that have been inactivated by oxidation. Catalyzes the reversible oxidation-reduction of methionine sulfoxide in proteins to methionine. In Ligilactobacillus salivarius (strain UCC118) (Lactobacillus salivarius), this protein is Peptide methionine sulfoxide reductase MsrA.